A 515-amino-acid polypeptide reads, in one-letter code: Zinc-binding protein AdcA (515 aa).

The signal sequence occupies residues 1–28 (MKKKILLMMSLISVFFAWQLTQAKQVLA). His-66 lines the Zn(2+) pocket. The interval 126–148 (HHHEEADKKHEHNKHSEEGHNHA) is disordered. A his-rich loop region spans residues 129-148 (EEADKKHEHNKHSEEGHNHA). 3 residues coordinate Zn(2+): His-152, His-216, and Glu-291.

Belongs to the bacterial solute-binding protein 9 family.

Part of the ATP-binding cassette (ABC) transport system AdcABC involved in zinc import. Binds zinc with high affinity and specificity and delivers it to the membrane permease for translocation into the cytoplasm. The chain is Zinc-binding protein AdcA (adcA) from Streptococcus pyogenes serotype M3 (strain ATCC BAA-595 / MGAS315).